The following is a 508-amino-acid chain: Protein MGF 505-9R (508 aa).

ANK repeat units lie at residues 54-83, 253-282, and 313-343; these read SINL…NLHY, QVDT…RKTV, and IIKK…KINL.

This sequence belongs to the asfivirus MGF 505 family.

Functionally, plays a role in virus cell tropism, and may be required for efficient virus replication in macrophages. The protein is Protein MGF 505-9R of Ornithodoros (relapsing fever ticks).